A 360-amino-acid chain; its full sequence is Nucleoporin SEH1 (360 aa).

6 WD repeats span residues 10-49 (DHKD…EWHC), 55-96 (THSG…SNDK), 111-152 (DSRT…NLSQ), 160-210 (SCKL…RKYA), 217-258 (TVTD…KELT), and 276-315 (NHNS…NWKC). A Glycyl lysine isopeptide (Lys-Gly) (interchain with G-Cter in SUMO2) cross-link involves residue K12. S190 carries the post-translational modification Phosphoserine. Residues 324 to 342 (SPVNGSSQQGNSNPSVGSN) are compositionally biased toward low complexity. The tract at residues 324-360 (SPVNGSSQQGNSNPSVGSNIPSLQNSLNGSSAGRKHS) is disordered. Residues 343-354 (IPSLQNSLNGSS) are compositionally biased toward polar residues.

This sequence belongs to the WD repeat SEC13 family. As to quaternary structure, component of the Nup107-160 subcomplex of the nuclear pore complex (NPC). The Nup107-160 subcomplex includes NUP160, NUP133, NUP107, NUP98, NUP85, NUP43, NUP37, SEH1 and SEC13. The SEH1 subunit appears to be only weakly associated with the Nup107-160 subcomplex. Component of the GATOR2 subcomplex, composed of MIOS, SEC13, SEH1L, WDR24 and WDR59. The GATOR2 complex interacts with CASTOR1 and CASTOR2; the interaction is negatively regulated by arginine. The GATOR2 complex interacts with SESN1, SESN2 and SESN3; the interaction is negatively regulated by amino acids. SESN1, SESN2 and SESN3 convey leucine availability via direct interaction with SEH1L and WDR24.

Its subcellular location is the chromosome. The protein resides in the centromere. The protein localises to the kinetochore. It localises to the nucleus. It is found in the nuclear pore complex. Its subcellular location is the lysosome membrane. With respect to regulation, the GATOR2 complex is negatively regulated by the upstream amino acid sensors CASTOR1 and SESN2, which sequester the GATOR2 complex in absence of amino acids. In the presence of abundant amino acids, GATOR2 is released from CASTOR1 and SESN2 and activated. Functionally, component of the Nup107-160 subcomplex of the nuclear pore complex (NPC). The Nup107-160 subcomplex is required for the assembly of a functional NPC. The Nup107-160 subcomplex is also required for normal kinetochore microtubule attachment, mitotic progression and chromosome segregation. This subunit plays a role in recruitment of the Nup107-160 subcomplex to the kinetochore. In terms of biological role, as a component of the GATOR2 complex, functions as an activator of the amino acid-sensing branch of the mTORC1 signaling pathway. The GATOR2 complex indirectly activates mTORC1 through the inhibition of the GATOR1 subcomplex. GATOR2 probably acts as an E3 ubiquitin-protein ligase toward GATOR1. In the presence of abundant amino acids, the GATOR2 complex mediates ubiquitination of the NPRL2 core component of the GATOR1 complex, leading to GATOR1 inactivation. In the absence of amino acids, GATOR2 is inhibited, activating the GATOR1 complex. Within the GATOR2 complex, SEC13 and SEH1L are required to stabilize the complex. In Bos taurus (Bovine), this protein is Nucleoporin SEH1 (SEH1L).